Here is a 61-residue protein sequence, read N- to C-terminus: Large ribosomal subunit protein eL24 (61 aa).

Zn(2+)-binding residues include C7, C10, C33, and C37. The C4-type zinc finger occupies 7 to 37 (CSFCGGDIPPATGMMHVRNDGTILWFCSNKC).

The protein belongs to the eukaryotic ribosomal protein eL24 family. Part of the 50S ribosomal subunit. Forms a cluster with proteins L3 and L14. Zn(2+) is required as a cofactor.

Its function is as follows. Binds to the 23S rRNA. This is Large ribosomal subunit protein eL24 from Metallosphaera sedula (strain ATCC 51363 / DSM 5348 / JCM 9185 / NBRC 15509 / TH2).